A 523-amino-acid polypeptide reads, in one-letter code: Translation initiation factor eIF2B subunit delta (523 aa).

Residues 1–154 are disordered; it reads MAAVAVAVRE…EHTQADDPTL (154 aa). The residue at position 2 (Ala-2) is an N-acetylalanine. Ser-12 carries the post-translational modification Phosphoserine. Over residues 31 to 40 the composition is skewed to basic and acidic residues; sequence MTQEEKLQLR. Residues 41–51 show a composition bias toward basic residues; that stretch reads KEKKQQKKKRK. Residue Thr-85 is modified to Phosphothreonine. Residues 95–120 show a composition bias toward basic and acidic residues; it reads TKAELRAERRAKQEAERALKQARKGE. Ser-129 is modified (phosphoserine). The segment at 170 to 179 is may bind the chemical integrated stress response (ISR) inhibitor ISRIB; sequence RKDYGSKVSL.

It belongs to the eIF-2B alpha/beta/delta subunits family. Component of the translation initiation factor 2B (eIF2B) complex which is a heterodecamer of two sets of five different subunits: alpha, beta, gamma, delta and epsilon. Subunits alpha, beta and delta comprise a regulatory subcomplex and subunits epsilon and gamma comprise a catalytic subcomplex. Within the complex, the hexameric regulatory complex resides at the center, with the two heterodimeric catalytic subcomplexes bound on opposite sides.

The protein resides in the cytoplasm. It is found in the cytosol. With respect to regulation, activated by the chemical integrated stress response (ISR) inhibitor ISRIB which stimulates guanine nucleotide exchange factor activity for both phosphorylated and unphosphorylated eIF2. Functionally, acts as a component of the translation initiation factor 2B (eIF2B) complex, which catalyzes the exchange of GDP for GTP on eukaryotic initiation factor 2 (eIF2) gamma subunit. Its guanine nucleotide exchange factor activity is repressed when bound to eIF2 complex phosphorylated on the alpha subunit, thereby limiting the amount of methionyl-initiator methionine tRNA available to the ribosome and consequently global translation is repressed. In Oryctolagus cuniculus (Rabbit), this protein is Translation initiation factor eIF2B subunit delta (EIF2B4).